The chain runs to 121 residues: Small ribosomal subunit protein uS13 (121 aa).

The tract at residues 96 to 121 is disordered; it reads PVRGQNTKNNARTRKGKAVAIAGKKK. Residues 106-121 are compositionally biased toward basic residues; the sequence is ARTRKGKAVAIAGKKK.

The protein belongs to the universal ribosomal protein uS13 family. As to quaternary structure, part of the 30S ribosomal subunit. Forms a loose heterodimer with protein S19. Forms two bridges to the 50S subunit in the 70S ribosome.

Its function is as follows. Located at the top of the head of the 30S subunit, it contacts several helices of the 16S rRNA. In the 70S ribosome it contacts the 23S rRNA (bridge B1a) and protein L5 of the 50S subunit (bridge B1b), connecting the 2 subunits; these bridges are implicated in subunit movement. Contacts the tRNAs in the A and P-sites. This is Small ribosomal subunit protein uS13 from Streptococcus pneumoniae serotype 4 (strain ATCC BAA-334 / TIGR4).